Consider the following 159-residue polypeptide: Large ribosomal subunit protein uL15 (159 aa).

Residues 1–39 (MKLNELSPADGSTKKRMRVGRGVGSGKGKTAGRGVKGQN) are disordered. The span at 21–35 (RGVGSGKGKTAGRGV) shows a compositional bias: gly residues.

It belongs to the universal ribosomal protein uL15 family. As to quaternary structure, part of the 50S ribosomal subunit.

Functionally, binds to the 23S rRNA. The polypeptide is Large ribosomal subunit protein uL15 (Hyphomonas neptunium (strain ATCC 15444)).